The following is a 203-amino-acid chain: Peptidyl-tRNA hydrolase (203 aa).

Y14 lines the tRNA pocket. H19 serves as the catalytic Proton acceptor. Residues Y64, N66, and N112 each contribute to the tRNA site.

Belongs to the PTH family. As to quaternary structure, monomer.

Its subcellular location is the cytoplasm. The catalysed reaction is an N-acyl-L-alpha-aminoacyl-tRNA + H2O = an N-acyl-L-amino acid + a tRNA + H(+). Its function is as follows. Hydrolyzes ribosome-free peptidyl-tRNAs (with 1 or more amino acids incorporated), which drop off the ribosome during protein synthesis, or as a result of ribosome stalling. Functionally, catalyzes the release of premature peptidyl moieties from peptidyl-tRNA molecules trapped in stalled 50S ribosomal subunits, and thus maintains levels of free tRNAs and 50S ribosomes. The chain is Peptidyl-tRNA hydrolase from Methylobacterium nodulans (strain LMG 21967 / CNCM I-2342 / ORS 2060).